A 165-amino-acid chain; its full sequence is Protein SprT (165 aa).

The SprT-like domain occupies 22–163 (LAQANLKLGR…RCVHCGEQLT (142 aa)). His-78 provides a ligand contact to Zn(2+). Glu-79 is a catalytic residue. His-82 serves as a coordination point for Zn(2+).

This sequence belongs to the SprT family. Zn(2+) serves as cofactor.

Its subcellular location is the cytoplasm. In Escherichia fergusonii (strain ATCC 35469 / DSM 13698 / CCUG 18766 / IAM 14443 / JCM 21226 / LMG 7866 / NBRC 102419 / NCTC 12128 / CDC 0568-73), this protein is Protein SprT.